Here is a 511-residue protein sequence, read N- to C-terminus: Glutamyl-tRNA(Gln) amidotransferase subunit A, mitochondrial (511 aa).

Residues K72 and S149 each act as charge relay system in the active site. The active-site Acyl-ester intermediate is S173.

This sequence belongs to the amidase family. GatA subfamily. As to quaternary structure, subunit of the heterotrimeric GatCAB amidotransferase (AdT) complex, composed of A, B and C subunits.

The protein resides in the mitochondrion. It carries out the reaction L-glutamyl-tRNA(Gln) + L-glutamine + ATP + H2O = L-glutaminyl-tRNA(Gln) + L-glutamate + ADP + phosphate + H(+). Functionally, allows the formation of correctly charged Gln-tRNA(Gln) through the transamidation of misacylated Glu-tRNA(Gln) in the mitochondria. The reaction takes place in the presence of glutamine and ATP through an activated gamma-phospho-Glu-tRNA(Gln). The chain is Glutamyl-tRNA(Gln) amidotransferase subunit A, mitochondrial from Fusarium vanettenii (strain ATCC MYA-4622 / CBS 123669 / FGSC 9596 / NRRL 45880 / 77-13-4) (Fusarium solani subsp. pisi).